Reading from the N-terminus, the 329-residue chain is Ribosomal RNA small subunit methyltransferase C (329 aa).

The protein belongs to the methyltransferase superfamily. RsmC family. As to quaternary structure, monomer.

It is found in the cytoplasm. The enzyme catalyses guanosine(1207) in 16S rRNA + S-adenosyl-L-methionine = N(2)-methylguanosine(1207) in 16S rRNA + S-adenosyl-L-homocysteine + H(+). Specifically methylates the guanine in position 1207 of 16S rRNA in the 30S particle. This is Ribosomal RNA small subunit methyltransferase C from Actinobacillus pleuropneumoniae serotype 3 (strain JL03).